Here is a 156-residue protein sequence, read N- to C-terminus: Small ribosomal subunit protein uS7 (156 aa).

The protein belongs to the universal ribosomal protein uS7 family. Part of the 30S ribosomal subunit. Contacts proteins S9 and S11.

In terms of biological role, one of the primary rRNA binding proteins, it binds directly to 16S rRNA where it nucleates assembly of the head domain of the 30S subunit. Is located at the subunit interface close to the decoding center, probably blocks exit of the E-site tRNA. The sequence is that of Small ribosomal subunit protein uS7 from Desulfitobacterium hafniense (strain DSM 10664 / DCB-2).